Consider the following 118-residue polypeptide: Putative pterin-4-alpha-carbinolamine dehydratase (118 aa).

Belongs to the pterin-4-alpha-carbinolamine dehydratase family.

The catalysed reaction is (4aS,6R)-4a-hydroxy-L-erythro-5,6,7,8-tetrahydrobiopterin = (6R)-L-erythro-6,7-dihydrobiopterin + H2O. The polypeptide is Putative pterin-4-alpha-carbinolamine dehydratase (Xanthomonas campestris pv. campestris (strain 8004)).